The following is a 423-amino-acid chain: Polyglutamylase complex subunit TTLL1 (423 aa).

One can recognise a TTL domain in the interval 1-367 (MAGRVKWVTD…NGEIPDCKWN (367 aa)). ATP contacts are provided by residues lysine 138, 144–145 (QG), 181–184 (SLYI), and 194–196 (KFD). An a protein-binding site is contributed by glutamine 144. Arginine 220 contributes to the L-glutamate binding site. 241-242 (TN) is a binding site for ATP. Residue lysine 259 participates in L-glutamate binding. 3 residues coordinate Mg(2+): aspartate 313, glutamate 326, and asparagine 328. Lysine 344 is a binding site for L-glutamate. Residues 390–423 (DGAERELRSRPGQPVGPRTGRSRDSGRNVLTTWK) form a disordered region.

It belongs to the tubulin polyglutamylase family. In terms of assembly, part of the neuronal tubulin polyglutamylase complex which contains TPGS1, TPGS2, TTLL1, LRRC49 and NICN1. Interacts with PCM1, CSTPP1 and LRRC49. Mg(2+) is required as a cofactor.

The protein resides in the cytoplasm. Its subcellular location is the cytoskeleton. The protein localises to the cilium basal body. It is found in the cilium axoneme. It localises to the cell projection. The protein resides in the cilium. Its subcellular location is the flagellum. It catalyses the reaction (L-glutamyl)(n)-gamma-L-glutamyl-L-glutamyl-[protein] + L-glutamate + ATP = (L-glutamyl)(n+1)-gamma-L-glutamyl-L-glutamyl-[protein] + ADP + phosphate + H(+). In terms of biological role, catalytic subunit of a polyglutamylase complex which modifies tubulin, generating side chains of glutamate on the gamma-carboxyl group of specific glutamate residues within the C-terminal tail of tubulin. Probably involved in the side-chain elongation step of the polyglutamylation reaction rather than the initiation step. Modifies both alpha- and beta-tubulins with a preference for the alpha-tail. Unlike most polyglutamylases of the tubulin--tyrosine ligase family, only displays a catalytic activity when in complex with other proteins as it is most likely lacking domains important for autonomous activity. Part of the neuronal tubulin polyglutamylase complex. Mediates cilia and flagella polyglutamylation which is essential for their biogenesis and motility. Involved in respiratory motile cilia function through the regulation of beating asymmetry. Essential for sperm flagella biogenesis, motility and male fertility. Involved in KLF4 glutamylation which impedes its ubiquitination, thereby leading to somatic cell reprogramming, pluripotency maintenance and embryogenesis. This chain is Polyglutamylase complex subunit TTLL1 (Ttll1), found in Rattus norvegicus (Rat).